The chain runs to 513 residues: ATP synthase subunit alpha (513 aa).

169–176 lines the ATP pocket; that stretch reads GDRQTGKT.

The protein belongs to the ATPase alpha/beta chains family. As to quaternary structure, F-type ATPases have 2 components, CF(1) - the catalytic core - and CF(0) - the membrane proton channel. CF(1) has five subunits: alpha(3), beta(3), gamma(1), delta(1), epsilon(1). CF(0) has three main subunits: a(1), b(2) and c(9-12). The alpha and beta chains form an alternating ring which encloses part of the gamma chain. CF(1) is attached to CF(0) by a central stalk formed by the gamma and epsilon chains, while a peripheral stalk is formed by the delta and b chains.

It is found in the cell inner membrane. The enzyme catalyses ATP + H2O + 4 H(+)(in) = ADP + phosphate + 5 H(+)(out). Functionally, produces ATP from ADP in the presence of a proton gradient across the membrane. The alpha chain is a regulatory subunit. The polypeptide is ATP synthase subunit alpha (Hydrogenovibrio crunogenus (strain DSM 25203 / XCL-2) (Thiomicrospira crunogena)).